The chain runs to 259 residues: DNA-directed RNA polymerase 30 kDa polypeptide (259 aa).

The segment at 155–195 adopts a TFIIS-type zinc-finger fold; it reads YNTPCPNCKSRNTTPMMIQTRAADEPPLVRHACRDCKQHFK. Residues C159, C162, C187, and C190 each contribute to the Zn(2+) site. The disordered stretch occupies residues 220–259; the sequence is EILPDNNPSPPESPEPASPIDDGLIRVTFDRNDEPPEDDE. The span at 226-236 shows a compositional bias: pro residues; sequence NPSPPESPEPA.

The protein belongs to the poxviridae DNA-directed RNA polymerase 30 kDa subunit family. In terms of assembly, the DNA-dependent RNA polymerase (vRNAP) consists of eight subunits encoded by early viral genes and termed according to their apparent molecular masses Rpo147, Rpo132, Rpo35, Rpo30, Rpo22, Rpo19, Rpo18, and Rpo7. The same holoenzyme, with the addition of the transcription-specificity factor RAP94, is used for early gene expression.

Its subcellular location is the virion. It localises to the host cytoplasm. The enzyme catalyses RNA(n) + a ribonucleoside 5'-triphosphate = RNA(n+1) + diphosphate. Its function is as follows. Part of the DNA-dependent RNA polymerase which catalyzes the transcription of viral DNA into RNA using the four ribonucleoside triphosphates as substrates. Responsible for the transcription of early, intermediate and late genes. DNA-dependent RNA polymerase associates with the early transcription factor (ETF), itself composed of OPG118 and OPG134, thereby allowing the early genes transcription. Late transcription, and probably also intermediate transcription, require newly synthesized RNA polymerase. The polypeptide is DNA-directed RNA polymerase 30 kDa polypeptide (OPG066) (Variola virus (isolate Human/India/Ind3/1967) (VARV)).